Reading from the N-terminus, the 642-residue chain is Mini-chromosome maintenance complex-binding protein (642 aa).

The span at 151 to 161 shows a compositional bias: polar residues; the sequence is ARVSPSTSYTP. Residues 151–188 are disordered; the sequence is ARVSPSTSYTPSRHKRSYEDDEDMDLQPNKQKDQHMGA. Position 154 is a phosphoserine (Ser-154). At Thr-160 the chain carries Phosphothreonine. 2 positions are modified to phosphoserine: Ser-167 and Ser-298.

Belongs to the MCMBP family. Interacts with the MCM complex: associates with the MCM3-7 complex which lacks MCM2, while it does not interact with the MCM complex when MCM2 is present (MCM2-7 complex). Interacts with the RPA complex, when composed of all RPA1, RPA2 and RPA3 components, but not with RPA1 or RPA2 alone.

It localises to the nucleus. In terms of biological role, associated component of the MCM complex that acts as a regulator of DNA replication. Binds to the MCM complex during late S phase and promotes the disassembly of the MCM complex from chromatin, thereby acting as a key regulator of pre-replication complex (pre-RC) unloading from replicated DNA. Can dissociate the MCM complex without addition of ATP; probably acts by destabilizing interactions of each individual subunits of the MCM complex. Required for sister chromatid cohesion. This Bos taurus (Bovine) protein is Mini-chromosome maintenance complex-binding protein (MCMBP).